Reading from the N-terminus, the 723-residue chain is Threonine--tRNA ligase, mitochondrial (723 aa).

Ser57 bears the Phosphoserine mark. Residues Arg64 to Thr126 form the TGS domain.

This sequence belongs to the class-II aminoacyl-tRNA synthetase family. Homodimer.

Its subcellular location is the mitochondrion matrix. The catalysed reaction is tRNA(Thr) + L-threonine + ATP = L-threonyl-tRNA(Thr) + AMP + diphosphate + H(+). In terms of biological role, catalyzes the attachment of threonine to tRNA(Thr) in a two-step reaction: threonine is first activated by ATP to form Thr-AMP and then transferred to the acceptor end of tRNA(Thr). Also edits incorrectly charged tRNA(Thr) via its editing domain. This is Threonine--tRNA ligase, mitochondrial (Tars2) from Rattus norvegicus (Rat).